The sequence spans 407 residues: Argininosuccinate synthase (407 aa).

8 to 16 (AYSGGLDTT) lines the ATP pocket. L-citrulline is bound by residues Tyr-86 and Ser-91. Gly-116 contributes to the ATP binding site. L-aspartate-binding residues include Thr-118, Asn-122, and Asp-123. Asn-122 provides a ligand contact to L-citrulline. L-citrulline-binding residues include Arg-126, Ser-178, Ser-187, Glu-264, and Tyr-276.

This sequence belongs to the argininosuccinate synthase family. Type 1 subfamily. As to quaternary structure, homotetramer.

Its subcellular location is the cytoplasm. The enzyme catalyses L-citrulline + L-aspartate + ATP = 2-(N(omega)-L-arginino)succinate + AMP + diphosphate + H(+). It functions in the pathway amino-acid biosynthesis; L-arginine biosynthesis; L-arginine from L-ornithine and carbamoyl phosphate: step 2/3. This Lachnoclostridium phytofermentans (strain ATCC 700394 / DSM 18823 / ISDg) (Clostridium phytofermentans) protein is Argininosuccinate synthase.